The following is a 291-amino-acid chain: ATP synthase subunit b 2 (291 aa).

A helical transmembrane segment spans residues 2–22 (LIDGFTVVAQIVNFLILVWLL).

The protein belongs to the ATPase B chain family. F-type ATPases have 2 components, F(1) - the catalytic core - and F(0) - the membrane proton channel. F(1) has five subunits: alpha(3), beta(3), gamma(1), delta(1), epsilon(1). F(0) has three main subunits: a(1), b(2) and c(10-14). The alpha and beta chains form an alternating ring which encloses part of the gamma chain. F(1) is attached to F(0) by a central stalk formed by the gamma and epsilon chains, while a peripheral stalk is formed by the delta and b chains.

It localises to the cell inner membrane. In terms of biological role, f(1)F(0) ATP synthase produces ATP from ADP in the presence of a proton or sodium gradient. F-type ATPases consist of two structural domains, F(1) containing the extramembraneous catalytic core and F(0) containing the membrane proton channel, linked together by a central stalk and a peripheral stalk. During catalysis, ATP synthesis in the catalytic domain of F(1) is coupled via a rotary mechanism of the central stalk subunits to proton translocation. Its function is as follows. Component of the F(0) channel, it forms part of the peripheral stalk, linking F(1) to F(0). In Nitrosospira multiformis (strain ATCC 25196 / NCIMB 11849 / C 71), this protein is ATP synthase subunit b 2.